The primary structure comprises 403 residues: Phosphopentomutase (403 aa).

Residues Asp-13, Asp-298, His-303, Asp-339, His-340, and His-351 each coordinate Mn(2+).

This sequence belongs to the phosphopentomutase family. Mn(2+) serves as cofactor.

Its subcellular location is the cytoplasm. The catalysed reaction is 2-deoxy-alpha-D-ribose 1-phosphate = 2-deoxy-D-ribose 5-phosphate. It carries out the reaction alpha-D-ribose 1-phosphate = D-ribose 5-phosphate. The protein operates within carbohydrate degradation; 2-deoxy-D-ribose 1-phosphate degradation; D-glyceraldehyde 3-phosphate and acetaldehyde from 2-deoxy-alpha-D-ribose 1-phosphate: step 1/2. Isomerase that catalyzes the conversion of deoxy-ribose 1-phosphate (dRib-1-P) and ribose 1-phosphate (Rib-1-P) to deoxy-ribose 5-phosphate (dRib-5-P) and ribose 5-phosphate (Rib-5-P), respectively. The sequence is that of Phosphopentomutase from Streptococcus thermophilus (strain CNRZ 1066).